The chain runs to 185 residues: Large ribosomal subunit protein uL5 (185 aa).

It belongs to the universal ribosomal protein uL5 family. Part of the 50S ribosomal subunit; part of the 5S rRNA/L5/L18/L25 subcomplex. Contacts the 5S rRNA and the P site tRNA. Forms a bridge to the 30S subunit in the 70S ribosome.

This is one of the proteins that bind and probably mediate the attachment of the 5S RNA into the large ribosomal subunit, where it forms part of the central protuberance. In the 70S ribosome it contacts protein S13 of the 30S subunit (bridge B1b), connecting the 2 subunits; this bridge is implicated in subunit movement. Contacts the P site tRNA; the 5S rRNA and some of its associated proteins might help stabilize positioning of ribosome-bound tRNAs. This is Large ribosomal subunit protein uL5 from Parabacteroides distasonis (strain ATCC 8503 / DSM 20701 / CIP 104284 / JCM 5825 / NCTC 11152).